A 305-amino-acid polypeptide reads, in one-letter code: GMP synthase [glutamine-hydrolyzing] subunit B (305 aa).

The GMPS ATP-PPase domain occupies 2–184 (VKTEKFIQKS…LGLPPEIQHR (183 aa)). 29–35 (SGGVDSS) provides a ligand contact to ATP.

As to quaternary structure, heterodimer composed of a glutamine amidotransferase subunit (A) and a GMP-binding subunit (B).

The catalysed reaction is XMP + L-glutamine + ATP + H2O = GMP + L-glutamate + AMP + diphosphate + 2 H(+). It functions in the pathway purine metabolism; GMP biosynthesis; GMP from XMP (L-Gln route): step 1/1. Functionally, catalyzes the synthesis of GMP from XMP. The sequence is that of GMP synthase [glutamine-hydrolyzing] subunit B from Methanoregula boonei (strain DSM 21154 / JCM 14090 / 6A8).